Reading from the N-terminus, the 968-residue chain is MPFSLGQRWISDTESELGLGTVVGMEGRMVTVLFSATGENRLFSRSEAPLTRVIFNPGDKVESHDEWSLTVTEVEEKDNLIIYHGIHSETGEQASLRETLLNHNIRFNKPQDRLFAGQIDRMDRFGVRYQCQLLRNKLATSDLLGLQGPRVGLIPHQQWIAHEVGQRFAPRVLLADEVGLGKTIEAGLIIHQQLLTGRAERILVIVPDTLRHQWLVEMLRRFNLRFSVFDEDRCVEAYADNDNPFYTEQLVICSLELLRKKKRLEQALDADWDLMVVDEAHHLEWSEDAPSRAYKVVEALSEVVPGVLLLTATPDQLGHQSHFARLRLLDPDRFYDYPSFLKEEESYKDVATAADALACGESLSSEAIASLTQLLSEKDISDSINLIQDASANADKRNQAREELLQELLDRHGTGRVLYRNSRASVKGFPTRNLHIHPQPMPEQYVTASRVSAMMNKHLDTNAKVRQVLSPEKIYQDFDSGSASWWKFDPRVDWLIDFLKTNRSKKVLIIASQAETALSLEEALRTREGIQATVFHEGMSIIERDKAGAYFAQETGGAQALICSEIGSEGRNFQFASHLVLFDLPLNPDLLEQRIGRLDRIGQKNDVEIHLPYLAGTAQERLMQWYHQGLNAFECTCPSGHILFGEFSGELLETLTTDDESSLETLLDNTKSRYQELKVAMEQGRDKLLEINSHGGERANKLVESLAARDEDTQLIGSVIRLWDIIGVEQEDSGENAIVLHPSEHMMFPTYPGLPEDGITVTFDRDMALSRDDIALITQEHPIVQTGLDLITSSETGTTSVAVLKNKALPAGTVFLELIYMADASAPKSSQLYRYLPPTPIRILLDKSGNNLSDNVTYESFDRQLSAVNRHIASKLVTASQAILHPLFAKGETFAANELKLLTETAREKMTQQLTGELERLKALKAVNPNIRDEELTHLSEQMSELNRYLDSSQLQLDAIRLVLVSHA.

A Helicase ATP-binding domain is found at 163 to 332; sequence EVGQRFAPRV…FARLRLLDPD (170 aa). 176–183 is a binding site for ATP; the sequence is DEVGLGKT. Residues 278–281 carry the DEAH box motif; it reads DEAH. Residues 491–678 form the Helicase C-terminal domain; it reads RVDWLIDFLK…NTKSRYQELK (188 aa).

Belongs to the SNF2/RAD54 helicase family. RapA subfamily. As to quaternary structure, interacts with the RNAP. Has a higher affinity for the core RNAP than for the holoenzyme. Its ATPase activity is stimulated by binding to RNAP.

Transcription regulator that activates transcription by stimulating RNA polymerase (RNAP) recycling in case of stress conditions such as supercoiled DNA or high salt concentrations. Probably acts by releasing the RNAP, when it is trapped or immobilized on tightly supercoiled DNA. Does not activate transcription on linear DNA. Probably not involved in DNA repair. The polypeptide is RNA polymerase-associated protein RapA (Shewanella piezotolerans (strain WP3 / JCM 13877)).